The primary structure comprises 932 residues: UPF0182 protein Syncc9902_1151 (932 aa).

9 helical membrane passes run 4–24 (FLWILLPPVLVVVARMHVEWV), 40–60 (MLQLLFAGAGSIPVFLAVLWL), 85–105 (VLMVSGLAFLACSVVLSDLAI), 124–144 (MASEWKALLPIQLAIAGVSLC), 151–171 (WVAVAMGFALVLVVSRAWGVW), 201–221 (IQLGLELLVLSGTFTTAHAVW), 243–263 (YRWLSIGVGTNLLGVAGLVWL), 293–313 (LLAFVLLVLGVSCIVRGIGHL), and 315–335 (RLLLLCVAAIVIIESTLTPLT).

The protein belongs to the UPF0182 family.

The protein resides in the cell membrane. This is UPF0182 protein Syncc9902_1151 from Synechococcus sp. (strain CC9902).